Reading from the N-terminus, the 193-residue chain is MLLSDRDILAAQSAGHISLDPWTPEMVQPASIDVRLDRYFRLFNNHAYTYVDPAENQGALTEQFEVAPDEPWILHPGEFALGSTWEYVKLDPSIAARLEGKSSLGRLGILTHSTAGFIDPGFEGHITLELSNVSTLPVKLWPGMKIGQMCFFQLSSPAEHPYGSKGTGSHYQGQRGPTPSRSYENFYRAHIDD.

Residues lysine 101–arginine 106, aspartate 119, threonine 127–glutamate 129, glutamine 148, tyrosine 162, and glutamine 174 each bind dCTP. The Proton donor/acceptor role is filled by glutamate 129. Residues tyrosine 162–glutamate 184 are disordered. The segment covering threonine 167–tyrosine 183 has biased composition (polar residues).

Belongs to the dCTP deaminase family. As to quaternary structure, homotrimer.

It catalyses the reaction dCTP + 2 H2O = dUMP + NH4(+) + diphosphate. Its pathway is pyrimidine metabolism; dUMP biosynthesis; dUMP from dCTP: step 1/1. Bifunctional enzyme that catalyzes both the deamination of dCTP to dUTP and the hydrolysis of dUTP to dUMP without releasing the toxic dUTP intermediate. The sequence is that of dCTP deaminase, dUMP-forming from Bifidobacterium longum (strain DJO10A).